The following is a 251-amino-acid chain: Chlorocatechol 1,2-dioxygenase (251 aa).

The Fe cation site is built by tyrosine 130, tyrosine 164, histidine 188, and histidine 190.

This sequence belongs to the intradiol ring-cleavage dioxygenase family. The cofactor is Fe(3+).

The enzyme catalyses 3-chlorocatechol + O2 = (2E,4Z)-2-chloromuconate + 2 H(+). The catalysed reaction is 3,4-dichlorocatechol + O2 = (2Z,4Z)-2,3-dichloromuconate + 2 H(+). It catalyses the reaction 3,5-dichlorocatechol + O2 = (2E,4E)-2,4-dichloromuconate + 2 H(+). It carries out the reaction 3,6-dichlorocatechol + O2 = (2E,4E)-2,5-dichloromuconate + H(+). The enzyme catalyses 3,4,6-trichlorocatechol + O2 = (2Z,4E)-2,3,5-trichloromuconate + H(+). The protein operates within xenobiotic degradation. In terms of biological role, chlorocatechol 1,2-dioxygenase involved in the degradation of chlorinated benzenes, that occurs via chlorocatechol intermediates. Displays broad substrate specificity. Preferentially cleaves 3-chlorocatechol and 3,4-dichlorocatechol, and shows lower activity on 3,5-dichlorocatechol, 3,6-dichlorocatechol and 3,4,6-trichlorocatechol in vitro. Is not able to convert 3,4,5-trichlorocatechol and 3,4,5,6-tetrachlorocatechol. Thus, probably functions in the degradation pathways of 1,2-dichlorobenzene, 1,4-dichlorobenzene and 1,2,4-trichlorobenzene (via 3,4-dichlorocatechol, 3,6-dichlorocatechol and 3,4,6-trichlorocatechol intermediates, respectively), which allow Pseudomonas sp. strain P51 to grow on these substrates as the sole carbon and energy source. The protein is Chlorocatechol 1,2-dioxygenase of Pseudomonas sp. (strain P51).